The sequence spans 286 residues: Diaminopimelate epimerase (286 aa).

Asparagine 22, glutamine 56, and asparagine 76 together coordinate substrate. The active-site Proton donor is cysteine 85. Substrate contacts are provided by residues 86-87, asparagine 169, asparagine 202, and 220-221; these read GN and ER. Cysteine 229 acts as the Proton acceptor in catalysis. 230 to 231 lines the substrate pocket; that stretch reads GS.

This sequence belongs to the diaminopimelate epimerase family. As to quaternary structure, homodimer.

The protein resides in the cytoplasm. The enzyme catalyses (2S,6S)-2,6-diaminopimelate = meso-2,6-diaminopimelate. Its pathway is amino-acid biosynthesis; L-lysine biosynthesis via DAP pathway; DL-2,6-diaminopimelate from LL-2,6-diaminopimelate: step 1/1. In terms of biological role, catalyzes the stereoinversion of LL-2,6-diaminopimelate (L,L-DAP) to meso-diaminopimelate (meso-DAP), a precursor of L-lysine and an essential component of the bacterial peptidoglycan. This is Diaminopimelate epimerase from Buchnera aphidicola subsp. Baizongia pistaciae (strain Bp).